The following is an 84-amino-acid chain: Putative UPF0320 protein YAL068W-A (84 aa).

The protein belongs to the UPF0320 family.

The polypeptide is Putative UPF0320 protein YAL068W-A (Saccharomyces cerevisiae (strain ATCC 204508 / S288c) (Baker's yeast)).